The following is a 210-amino-acid chain: Flagellar transcriptional regulator FlhC (210 aa).

C144, C147, C164, and C167 together coordinate Zn(2+).

The protein belongs to the FlhC family. In terms of assembly, heterohexamer composed of two FlhC and four FlhD subunits. Each FlhC binds a FlhD dimer, forming a heterotrimer, and a hexamer assembles by dimerization of two heterotrimers. It depends on Zn(2+) as a cofactor.

It localises to the cytoplasm. Functionally, functions in complex with FlhD as a master transcriptional regulator that regulates transcription of several flagellar and non-flagellar operons by binding to their promoter region. Activates expression of class 2 flagellar genes, including fliA, which is a flagellum-specific sigma factor that turns on the class 3 genes. Also regulates genes whose products function in a variety of physiological pathways. This is Flagellar transcriptional regulator FlhC from Cupriavidus pinatubonensis (strain JMP 134 / LMG 1197) (Cupriavidus necator (strain JMP 134)).